Consider the following 416-residue polypeptide: Phosphatidylinositol 5-phosphate 4-kinase type-2 beta (416 aa).

Ser2 bears the N-acetylserine mark. A Phosphothreonine modification is found at Thr8. A Phosphoserine modification is found at Ser19. The 378-residue stretch at 38–415 (ASEPILSVLM…RFNEFMSNIL (378 aa)) folds into the PIPK domain. The interval 64–70 (VMLMPDD) is required for interaction with PIP5K1A. Residues Lys94 and Lys150 each carry the N6-acetyllysine modification. Residues 202–204 (RNV) and Lys214 contribute to the ATP site. GTP-binding positions include 203–204 (NV) and Lys214. Thr322 is modified (phosphothreonine). At Ser326 the chain carries Phosphoserine. Asp369 lines the GTP pocket.

As to quaternary structure, homodimer. Binds TNFRSF1A. Interacts with PIP4K2A; the interaction suppresses ubiquitination by the SPOP/CUL3 complex. Probably interacts with PIP5K1A; the interaction inhibits PIP5K1A kinase activity. In terms of processing, ubiquitinated by the SPOP/CUL3 complex. Ubiquitination is stimulated by PtdIns5P levels. Post-translationally, phosphorylated on serine residues.

The protein localises to the endoplasmic reticulum membrane. The protein resides in the cell membrane. It is found in the nucleus. It localises to the cytoplasm. The catalysed reaction is a 1,2-diacyl-sn-glycero-3-phospho-(1D-myo-inositol-5-phosphate) + ATP = a 1,2-diacyl-sn-glycero-3-phospho-(1D-myo-inositol-4,5-bisphosphate) + ADP + H(+). The enzyme catalyses 1,2-dihexadecanoyl-sn-glycero-3-phospho-(1D-myo-inositol-5-phosphate) + ATP = 1,2-dihexadecanoyl-sn-glycero-3-phospho-(1D-myo-inositol-4,5-bisphosphate) + ADP + H(+). It catalyses the reaction 1,2-dihexadecanoyl-sn-glycero-3-phospho-(1D-myo-inositol-5-phosphate) + GTP = 1,2-dihexadecanoyl-sn-glycero-3-phospho-(1D-myo-inositol-4,5-bisphosphate) + GDP + H(+). In terms of biological role, participates in the biosynthesis of phosphatidylinositol 4,5-bisphosphate. Preferentially utilizes GTP, rather than ATP, for PI(5)P phosphorylation and its activity reflects changes in direct proportion to the physiological GTP concentration. Its GTP-sensing activity is critical for metabolic adaptation. PIP4Ks negatively regulate insulin signaling through a catalytic-independent mechanism. They interact with PIP5Ks and suppress PIP5K-mediated PtdIns(4,5)P2 synthesis and insulin-dependent conversion to PtdIns(3,4,5)P3. The protein is Phosphatidylinositol 5-phosphate 4-kinase type-2 beta of Rattus norvegicus (Rat).